The chain runs to 425 residues: Tryptophan synthase beta chain (425 aa).

Position 107 is an N6-(pyridoxal phosphate)lysine (K107).

It belongs to the TrpB family. As to quaternary structure, tetramer of two alpha and two beta chains. The cofactor is pyridoxal 5'-phosphate.

The enzyme catalyses (1S,2R)-1-C-(indol-3-yl)glycerol 3-phosphate + L-serine = D-glyceraldehyde 3-phosphate + L-tryptophan + H2O. It participates in amino-acid biosynthesis; L-tryptophan biosynthesis; L-tryptophan from chorismate: step 5/5. Its function is as follows. The beta subunit is responsible for the synthesis of L-tryptophan from indole and L-serine. The chain is Tryptophan synthase beta chain from Synechococcus sp. (strain JA-2-3B'a(2-13)) (Cyanobacteria bacterium Yellowstone B-Prime).